Reading from the N-terminus, the 364-residue chain is Phosphoserine aminotransferase (364 aa).

An L-glutamate-binding site is contributed by arginine 46. Residues 80–81, tryptophan 106, threonine 157, aspartate 176, and glutamine 199 each bind pyridoxal 5'-phosphate; that span reads AR. Lysine 200 carries the post-translational modification N6-(pyridoxal phosphate)lysine. Residue 241-242 participates in pyridoxal 5'-phosphate binding; that stretch reads NT.

The protein belongs to the class-V pyridoxal-phosphate-dependent aminotransferase family. SerC subfamily. In terms of assembly, homodimer. Requires pyridoxal 5'-phosphate as cofactor.

It localises to the cytoplasm. The catalysed reaction is O-phospho-L-serine + 2-oxoglutarate = 3-phosphooxypyruvate + L-glutamate. The enzyme catalyses 4-(phosphooxy)-L-threonine + 2-oxoglutarate = (R)-3-hydroxy-2-oxo-4-phosphooxybutanoate + L-glutamate. The protein operates within amino-acid biosynthesis; L-serine biosynthesis; L-serine from 3-phospho-D-glycerate: step 2/3. It functions in the pathway cofactor biosynthesis; pyridoxine 5'-phosphate biosynthesis; pyridoxine 5'-phosphate from D-erythrose 4-phosphate: step 3/5. In terms of biological role, catalyzes the reversible conversion of 3-phosphohydroxypyruvate to phosphoserine and of 3-hydroxy-2-oxo-4-phosphonooxybutanoate to phosphohydroxythreonine. In Vibrio vulnificus (strain YJ016), this protein is Phosphoserine aminotransferase.